The sequence spans 216 residues: UPF0711 protein C18orf21 homolog (216 aa).

2 disordered regions span residues 118–185 (RSFL…ASKT) and 197–216 (SQSE…LSSL). The span at 124-136 (LKSNPTTPTSKLS) shows a compositional bias: polar residues. Serine 126 carries the post-translational modification Phosphoserine. 2 positions are modified to phosphothreonine: threonine 130 and threonine 139. Composition is skewed to polar residues over residues 145 to 157 (PSSA…SGSK) and 167 to 182 (TPTS…SKNA). A compositionally biased stretch (basic and acidic residues) spans 200 to 209 (ESKKNPKMDF).

Belongs to the UPF0711 family.

This is UPF0711 protein C18orf21 homolog from Bos taurus (Bovine).